Reading from the N-terminus, the 202-residue chain is MTSIRIFIKFYGGTMRKFLIFLIFLSVLGCGITISGCIGGKNVEEIQNMQEQVVQQQQNENQEEYQNEDEGVDYNSIRDVQPIGTAKEADEKIRPILNEVFGEVKLMEYVSTGKQNEGESIVLTYVPKRKITTNDFEKLNEAIKKSGYFESSGGIAGGGQSGEGMVLWYVSKDNKSAIQIILYPDTNEIVVGYYKGKIYSSQ.

The chain crosses the membrane as a helical span at residues 18–38 (FLIFLIFLSVLGCGITISGCI).

The protein localises to the membrane. This is an uncharacterized protein from Methanocaldococcus jannaschii (strain ATCC 43067 / DSM 2661 / JAL-1 / JCM 10045 / NBRC 100440) (Methanococcus jannaschii).